The following is a 201-amino-acid chain: Coiled-coil domain-containing protein 195 (201 aa).

Residues 4–38 (DIQLMRLIQEMRAEIHKLEKENQALRMKLTASSQR) are a coiled coil. Disordered regions lie at residues 28–72 (LRMK…DAAP) and 179–201 (SKNSSSLKHSPNQATNQLSIIAE). The segment covering 179–188 (SKNSSSLKHS) has biased composition (low complexity). The segment covering 189–201 (PNQATNQLSIIAE) has biased composition (polar residues).

The polypeptide is Coiled-coil domain-containing protein 195 (Homo sapiens (Human)).